We begin with the raw amino-acid sequence, 467 residues long: Cysteine--tRNA ligase (467 aa).

Zn(2+) is bound at residue Cys-29. The short motif at 31-41 (PTVYNYIHIGN) is the 'HIGH' region element. Residues Cys-209, His-234, and Glu-238 each contribute to the Zn(2+) site. Residues 266 to 270 (KMSKS) carry the 'KMSKS' region motif. Lys-269 is an ATP binding site. Residue Ser-270 is modified to Phosphoserine.

Belongs to the class-I aminoacyl-tRNA synthetase family. As to quaternary structure, monomer. Zn(2+) is required as a cofactor.

It is found in the cytoplasm. The enzyme catalyses tRNA(Cys) + L-cysteine + ATP = L-cysteinyl-tRNA(Cys) + AMP + diphosphate. This chain is Cysteine--tRNA ligase, found in Bacillus licheniformis (strain ATCC 14580 / DSM 13 / JCM 2505 / CCUG 7422 / NBRC 12200 / NCIMB 9375 / NCTC 10341 / NRRL NRS-1264 / Gibson 46).